The following is a 471-amino-acid chain: Nuclear receptor subfamily 0 group B member 1 (471 aa).

Tandem repeats lie at residues 1-67 (MAGE…YRCC), 68-134 (FCGE…YRCC), and 135-201 (FCGE…YRCC). Residues 1-253 (MAGEDHQWQG…QRVALKSPQV (253 aa)) form a 4 X 67 AA tandem repeats region. Short sequence motifs (LXXLL motif) lie at residues 13–17 (LYNML), 80–84 (LYNML), and 147–151 (LYSLL). The 4; truncated repeat unit spans residues 202 to 253 (FCGEDHPRQSGILCNMPMSAKQTHVAPEAQPGAPWWDPSCAAQRVALKSPQV). Positions 210–470 (QSGILCNMPM…DMMLEMLCAK (261 aa)) constitute an NR LBD domain. Positions 462-467 (MMLEML) match the AF-2 motif motif.

It belongs to the nuclear hormone receptor family. NR0 subfamily. Homodimer. Interacts with NR5A1, NR5A2, NR0B2 and with COPS2. Interacts with ESRRB; represses ESRRB activity at the GATA6 promoter.

The protein localises to the nucleus. It localises to the cytoplasm. Nuclear receptor that lacks a DNA-binding domain and acts as a corepressor that inhibits the transcriptional activity of other nuclear receptors through heterodimeric interactions. Component of a cascade required for the development of the hypothalamic-pituitary-adrenal-gonadal axis. May also have a role in the development of the embryo and in the maintenance of embryonic stem cell pluripotency. The chain is Nuclear receptor subfamily 0 group B member 1 (NR0B1) from Sus scrofa (Pig).